A 386-amino-acid chain; its full sequence is Enoyl-[acyl-carrier-protein] reductase 2, mitochondrial (386 aa).

The N-terminal 22 residues, 1 to 22, are a transit peptide targeting the mitochondrion; sequence MYSVLKQSIRPRLLATHNQFRT. The active-site Proton donor is tyrosine 79. NADP(+)-binding positions include asparagine 172, 199 to 202, 222 to 224, 296 to 299, 321 to 323, and lysine 381; these read TSAV, RDR, YGGM, and FWV.

This sequence belongs to the zinc-containing alcohol dehydrogenase family. Quinone oxidoreductase subfamily. As to quaternary structure, homodimer and heterodimer with ETR1.

It is found in the mitochondrion. The catalysed reaction is a 2,3-saturated acyl-[ACP] + NADP(+) = a (2E)-enoyl-[ACP] + NADPH + H(+). In terms of biological role, required for respiration and the maintenance of the mitochondrial compartment. Oxidoreductase with a preference for short and medium chain substrates, including trans-2-hexenoyl-CoA (C6), trans-2-decenoyl-CoA (C10), and trans-2-hexadecenoyl-CoA (C16). May play a role in mitochondrial fatty acid synthesis. The sequence is that of Enoyl-[acyl-carrier-protein] reductase 2, mitochondrial (ETR2) from Candida tropicalis (Yeast).